A 270-amino-acid chain; its full sequence is Phosphatidylglycerol--prolipoprotein diacylglyceryl transferase (270 aa).

Helical transmembrane passes span 10 to 30 (VAVA…LVGI), 56 to 76 (LIFW…VLFY), 92 to 112 (WKGG…AWWF), 120 to 140 (FFQL…AGRI), 175 to 195 (SQLY…NLYA), 202 to 222 (MAVS…VEFV), and 237 to 257 (VTMG…LIWL). R139 is a binding site for a 1,2-diacyl-sn-glycero-3-phospho-(1'-sn-glycerol).

It belongs to the Lgt family.

It is found in the cell inner membrane. It catalyses the reaction L-cysteinyl-[prolipoprotein] + a 1,2-diacyl-sn-glycero-3-phospho-(1'-sn-glycerol) = an S-1,2-diacyl-sn-glyceryl-L-cysteinyl-[prolipoprotein] + sn-glycerol 1-phosphate + H(+). The protein operates within protein modification; lipoprotein biosynthesis (diacylglyceryl transfer). In terms of biological role, catalyzes the transfer of the diacylglyceryl group from phosphatidylglycerol to the sulfhydryl group of the N-terminal cysteine of a prolipoprotein, the first step in the formation of mature lipoproteins. This chain is Phosphatidylglycerol--prolipoprotein diacylglyceryl transferase, found in Pseudomonas syringae pv. tomato (strain ATCC BAA-871 / DC3000).